A 309-amino-acid chain; its full sequence is Ankyrin repeat and SOCS box protein 12 (309 aa).

ANK repeat units lie at residues 63-92 (VPGT…DVDS), 96-125 (KAQT…SPGG), 129-158 (NNCS…EANV), 171-200 (SCSG…DPDY), and 213-243 (RPRT…NIYL). An SOCS box domain is found at 268-308 (PRSLLSQVRLVVRRALCQAGQPQAINQLDIPPMLISYLKHQ).

It belongs to the ankyrin SOCS box (ASB) family. Interacts with CUL5 and RNF7.

It participates in protein modification; protein ubiquitination. Functionally, probable substrate-recognition component of a SCF-like ECS (Elongin-Cullin-SOCS-box protein) E3 ubiquitin-protein ligase complex which mediates the ubiquitination and subsequent proteasomal degradation of target proteins. The chain is Ankyrin repeat and SOCS box protein 12 (ASB12) from Homo sapiens (Human).